The following is an 80-amino-acid chain: SPI-1 type 3 secretion system needle filament protein (80 aa).

The protein belongs to the SctF family. In terms of assembly, the core secretion machinery of the T3SS is composed of approximately 20 different proteins, including cytoplasmic components, a base, an export apparatus and a needle. This subunit polymerizes and forms the helical needle filament. Interacts with the needle tip protein SipD/SctA. Interacts with the needle adapter protein PrgJ/SctI, the secretin InvG/SctC and the minor export apparatus protein SpaP/SctR. In vitro, the needle protomer refolds spontaneously to extend the needle from the distal end.

Its subcellular location is the secreted. The protein resides in the cell surface. With respect to regulation, binding of bile salts, including deoxycholate, to the PrgI:SipD interface may inhibit the T3SS function. In terms of biological role, component of the type III secretion system (T3SS), also called injectisome, which is used to inject bacterial effector proteins into eukaryotic host cells. PrgI/SctF1 forms the external needle filament that protrudes from the bacterial surface. Is probably involved in the transduction of an activating signal, thought to be mediated by the distal tip of the needle filament, to the secretion machine. Required for invasion of epithelial cells. Required for the secretion of the effector protein SptP. Functionally, during infection, can induce innate immune responses. The needle proteins interact with host TLR2 or TLR4, and induce signaling by NF-kappa-B and/or AP-1. This activation is MyD88 dependent and results in increased expression of cytokines, including TNF-alpha, IL-6 and IL-8. The polypeptide is SPI-1 type 3 secretion system needle filament protein (Salmonella typhimurium (strain LT2 / SGSC1412 / ATCC 700720)).